A 49-amino-acid polypeptide reads, in one-letter code: Large ribosomal subunit protein eL40 (49 aa).

It belongs to the eukaryotic ribosomal protein eL40 family.

The sequence is that of Large ribosomal subunit protein eL40 from Methanopyrus kandleri (strain AV19 / DSM 6324 / JCM 9639 / NBRC 100938).